The sequence spans 363 residues: Ribosome-binding ATPase YchF (363 aa).

In terms of domain architecture, OBG-type G spans 3-256 (FKCGIVGLPN…LDDDEKIEFL (254 aa)). 12–17 (NVGKST) lines the ATP pocket. Ser-16 and Thr-36 together coordinate Mg(2+). A TGS domain is found at 278-361 (NLQTYFTAGV…QDGDVMHFRF (84 aa)).

It belongs to the TRAFAC class OBG-HflX-like GTPase superfamily. OBG GTPase family. YchF/OLA1 subfamily. It depends on Mg(2+) as a cofactor.

In terms of biological role, ATPase that binds to both the 70S ribosome and the 50S ribosomal subunit in a nucleotide-independent manner. This Pasteurella multocida (strain Pm70) protein is Ribosome-binding ATPase YchF.